We begin with the raw amino-acid sequence, 335 residues long: Nucleoid-associated protein SeAg_B2375 (335 aa).

Belongs to the YejK family.

The protein resides in the cytoplasm. It localises to the nucleoid. In Salmonella agona (strain SL483), this protein is Nucleoid-associated protein SeAg_B2375.